The following is a 262-amino-acid chain: Small ribosomal subunit protein eS4A (262 aa).

One can recognise an S4 RNA-binding domain in the interval Leu-42–Ile-105.

Belongs to the eukaryotic ribosomal protein eS4 family. In terms of assembly, component of the small ribosomal subunit (SSU). Mature yeast ribosomes consist of a small (40S) and a large (60S) subunit. The 40S small subunit contains 1 molecule of ribosomal RNA (18S rRNA) and at least 33 different proteins. The large 60S subunit contains 3 rRNA molecules (25S, 5.8S and 5S rRNA) and at least 46 different proteins.

The protein resides in the cytoplasm. Its function is as follows. Component of the ribosome, a large ribonucleoprotein complex responsible for the synthesis of proteins in the cell. The small ribosomal subunit (SSU) binds messenger RNAs (mRNAs) and translates the encoded message by selecting cognate aminoacyl-transfer RNA (tRNA) molecules. The large subunit (LSU) contains the ribosomal catalytic site termed the peptidyl transferase center (PTC), which catalyzes the formation of peptide bonds, thereby polymerizing the amino acids delivered by tRNAs into a polypeptide chain. The nascent polypeptides leave the ribosome through a tunnel in the LSU and interact with protein factors that function in enzymatic processing, targeting, and the membrane insertion of nascent chains at the exit of the ribosomal tunnel. In Schizosaccharomyces pombe (strain 972 / ATCC 24843) (Fission yeast), this protein is Small ribosomal subunit protein eS4A (rps401).